Here is a 386-residue protein sequence, read N- to C-terminus: Protein phosphatase methylesterase 1 (386 aa).

The disordered stretch occupies residues 1–38 (MSALEKSMHLGRLPSRPPLPGSGGSQSGAKMRMGPGRK). Residue serine 15 is modified to Phosphoserine. Arginine 16 is modified (asymmetric dimethylarginine; alternate). Residue arginine 16 is modified to Omega-N-methylarginine; alternate. The residue at position 42 (serine 42) is a Phosphoserine. Serine 156 is an active-site residue. A compositionally biased stretch (acidic residues) spans 254 to 265 (IIEEEEEDEEGS). A disordered region spans residues 254–280 (IIEEEEEDEEGSESISKRKKEDDMETK). Residues 268 to 280 (ISKRKKEDDMETK) are compositionally biased toward basic and acidic residues. Residue histidine 349 is part of the active site.

The protein belongs to the AB hydrolase superfamily. Binds PPP2CA and PPP2CB. Phosphorylated by SIK1 following increases in intracellular sodium, leading to dissociation from the protein phosphatase 2A (PP2A) complex and subsequent dephosphorylation of sodium/potassium-transporting ATPase ATP1A1.

It catalyses the reaction [phosphatase 2A protein]-C-terminal L-leucine methyl ester + H2O = [phosphatase 2A protein]-C-terminal L-leucine + methanol + H(+). Demethylates proteins that have been reversibly carboxymethylated. Demethylates PPP2CB (in vitro) and PPP2CA. Binding to PPP2CA displaces the manganese ion and inactivates the enzyme. This is Protein phosphatase methylesterase 1 (PPME1) from Pongo abelii (Sumatran orangutan).